A 1372-amino-acid polypeptide reads, in one-letter code: DNA-directed RNA polymerase subunit beta (1372 aa).

This sequence belongs to the RNA polymerase beta chain family. As to quaternary structure, the RNAP catalytic core consists of 2 alpha, 1 beta, 1 beta' and 1 omega subunit. When a sigma factor is associated with the core the holoenzyme is formed, which can initiate transcription.

The catalysed reaction is RNA(n) + a ribonucleoside 5'-triphosphate = RNA(n+1) + diphosphate. DNA-dependent RNA polymerase catalyzes the transcription of DNA into RNA using the four ribonucleoside triphosphates as substrates. The polypeptide is DNA-directed RNA polymerase subunit beta (Rickettsia bellii (strain RML369-C)).